The following is a 2091-amino-acid chain: Protein Ycf2 (2091 aa).

A disordered region spans residues 191–210 (DSSQLKGSSDQSRDPLDSIS). 1432–1439 (GSIGTGRS) is a binding site for ATP.

This sequence belongs to the Ycf2 family.

It localises to the plastid. The protein resides in the chloroplast stroma. Functionally, probable ATPase of unknown function. Its presence in a non-photosynthetic plant (Epifagus virginiana) and experiments in tobacco indicate that it has an essential function which is probably not related to photosynthesis. This is Protein Ycf2 from Daucus carota (Wild carrot).